We begin with the raw amino-acid sequence, 255 residues long: tRNA (guanine-N(7)-)-methyltransferase (255 aa).

Positions 64, 89, 116, and 138 each coordinate S-adenosyl-L-methionine. Residue aspartate 138 is part of the active site. Substrate contacts are provided by residues lysine 142, aspartate 174, and 212–215 (TRYE).

It belongs to the class I-like SAM-binding methyltransferase superfamily. TrmB family.

The enzyme catalyses guanosine(46) in tRNA + S-adenosyl-L-methionine = N(7)-methylguanosine(46) in tRNA + S-adenosyl-L-homocysteine. It participates in tRNA modification; N(7)-methylguanine-tRNA biosynthesis. In terms of biological role, catalyzes the formation of N(7)-methylguanine at position 46 (m7G46) in tRNA. The sequence is that of tRNA (guanine-N(7)-)-methyltransferase from Rhodospirillum rubrum (strain ATCC 11170 / ATH 1.1.1 / DSM 467 / LMG 4362 / NCIMB 8255 / S1).